The following is a 1076-amino-acid chain: Carbamoyl phosphate synthase large chain (1076 aa).

Residues 1-403 (MPKRTDIQSI…SLQKALRGLE (403 aa)) are carboxyphosphate synthetic domain. Residues R129, R169, G175, G176, E208, L210, E215, G241, I242, H243, Q285, and E299 each coordinate ATP. Residues 133 to 328 (DKAMKSIGLE…IAKVAAKLAV (196 aa)) enclose the ATP-grasp 1 domain. Mg(2+) is bound by residues Q285, E299, and N301. Mn(2+)-binding residues include Q285, E299, and N301. Residues 404 to 553 (VGAAGLDEKV…YSTYDEECEA (150 aa)) are oligomerization domain. Residues 554 to 935 (NPTDKDKIMV…AYAKAELGCG (382 aa)) are carbamoyl phosphate synthetic domain. Residues 678 to 869 (QQAVQRLGLK…LAKIAARVMV (192 aa)) form the ATP-grasp 2 domain. Positions 714, 753, 755, 760, 785, 786, 787, 788, 828, and 840 each coordinate ATP. Residues Q828, E840, and N842 each coordinate Mg(2+). Mn(2+)-binding residues include Q828, E840, and N842. Residues 936 to 1076 (SVYPEGGRAL…LHARVKANQA (141 aa)) enclose the MGS-like domain. An allosteric domain region spans residues 936-1076 (SVYPEGGRAL…LHARVKANQA (141 aa)).

This sequence belongs to the CarB family. In terms of assembly, composed of two chains; the small (or glutamine) chain promotes the hydrolysis of glutamine to ammonia, which is used by the large (or ammonia) chain to synthesize carbamoyl phosphate. Tetramer of heterodimers (alpha,beta)4. It depends on Mg(2+) as a cofactor. Mn(2+) is required as a cofactor.

It catalyses the reaction hydrogencarbonate + L-glutamine + 2 ATP + H2O = carbamoyl phosphate + L-glutamate + 2 ADP + phosphate + 2 H(+). The catalysed reaction is hydrogencarbonate + NH4(+) + 2 ATP = carbamoyl phosphate + 2 ADP + phosphate + 2 H(+). Its pathway is amino-acid biosynthesis; L-arginine biosynthesis; carbamoyl phosphate from bicarbonate: step 1/1. It participates in pyrimidine metabolism; UMP biosynthesis via de novo pathway; (S)-dihydroorotate from bicarbonate: step 1/3. Functionally, large subunit of the glutamine-dependent carbamoyl phosphate synthetase (CPSase). CPSase catalyzes the formation of carbamoyl phosphate from the ammonia moiety of glutamine, carbonate, and phosphate donated by ATP, constituting the first step of 2 biosynthetic pathways, one leading to arginine and/or urea and the other to pyrimidine nucleotides. The large subunit (synthetase) binds the substrates ammonia (free or transferred from glutamine from the small subunit), hydrogencarbonate and ATP and carries out an ATP-coupled ligase reaction, activating hydrogencarbonate by forming carboxy phosphate which reacts with ammonia to form carbamoyl phosphate. This chain is Carbamoyl phosphate synthase large chain, found in Vibrio cholerae serotype O1 (strain ATCC 39315 / El Tor Inaba N16961).